A 375-amino-acid chain; its full sequence is Erythronate-4-phosphate dehydrogenase (375 aa).

2 residues coordinate substrate: serine 45 and threonine 67. An NAD(+)-binding site is contributed by aspartate 147. Arginine 209 is an active-site residue. NAD(+) is bound at residue aspartate 233. Glutamate 238 is an active-site residue. Histidine 255 (proton donor) is an active-site residue. Glycine 258 contributes to the NAD(+) binding site. Tyrosine 259 is a substrate binding site.

The protein belongs to the D-isomer specific 2-hydroxyacid dehydrogenase family. PdxB subfamily. As to quaternary structure, homodimer.

The protein resides in the cytoplasm. It carries out the reaction 4-phospho-D-erythronate + NAD(+) = (R)-3-hydroxy-2-oxo-4-phosphooxybutanoate + NADH + H(+). The protein operates within cofactor biosynthesis; pyridoxine 5'-phosphate biosynthesis; pyridoxine 5'-phosphate from D-erythrose 4-phosphate: step 2/5. Catalyzes the oxidation of erythronate-4-phosphate to 3-hydroxy-2-oxo-4-phosphonooxybutanoate. The polypeptide is Erythronate-4-phosphate dehydrogenase (Shewanella amazonensis (strain ATCC BAA-1098 / SB2B)).